The following is a 157-amino-acid chain: Heat shock protein beta-9 (157 aa).

A compositionally biased stretch (low complexity) spans 1–17 (MQRVGSSLPSGSQSASQ). Disordered regions lie at residues 1 to 20 (MQRVGSSLPSGSQSASQCPS) and 136 to 157 (PPSEAQTGPASRFRSRGSKKLA). Residues 35 to 148 (QRLTEDAAAV…EAQTGPASRF (114 aa)) enclose the sHSP domain. Residues 148 to 157 (FRSRGSKKLA) are compositionally biased toward basic residues.

The protein belongs to the small heat shock protein (HSP20) family.

The protein resides in the cytoplasm. Its subcellular location is the nucleus. This is Heat shock protein beta-9 (HSPB9) from Bos taurus (Bovine).